The primary structure comprises 1259 residues: Protein retinal degeneration B (1259 aa).

The disordered stretch occupies residues 268–378 (GGGEECSDDS…SKGALHSPVG (111 aa)). Residues Ser274 and Ser277 each carry the phosphoserine modification. Positions 284 to 293 (STAATAASTT) are enriched in low complexity. The segment covering 318–335 (SSDEEGEEEEDDDEDEND) has biased composition (acidic residues). Low complexity predominate over residues 347-363 (QGGSAQRSRSQSIQMAQ). Residues Ser401, Ser403, and Ser434 each carry the phosphoserine modification. 3 disordered regions span residues 427–454 (LLGE…GNSR), 472–500 (RGNK…STPS), and 660–692 (SQPG…NSRL). Low complexity predominate over residues 663-678 (GTASGASNSGGDAATN). A compositionally biased stretch (polar residues) spans 679–689 (INTHNPLSPRN). The 184-residue stretch at 730–913 (LDFEVCDFFM…IAFILRQIGK (184 aa)) folds into the DDHD domain.

The protein belongs to the PtdIns transfer protein family. PI transfer class IIA subfamily. Expressed in adult heads, not detected in bodies.

The enzyme catalyses a 1,2-diacyl-sn-glycero-3-phospho-(1D-myo-inositol)(in) = a 1,2-diacyl-sn-glycero-3-phospho-(1D-myo-inositol)(out). The catalysed reaction is a 1,2-diacyl-sn-glycero-3-phosphate(in) = a 1,2-diacyl-sn-glycero-3-phosphate(out). Functionally, catalyzes the transfer of phosphatidylinositol (PI) and phosphatidic acid (PA) between membranes. May control phosphatidylinositol concentration in transport vesicles from the subrhabdomeric cisternae (SRC) to the rhabdomere. May function as a calcium transporter. This Drosophila melanogaster (Fruit fly) protein is Protein retinal degeneration B (rdgB).